Reading from the N-terminus, the 261-residue chain is tRNA pseudouridine synthase A (261 aa).

Catalysis depends on Asp-52, which acts as the Nucleophile. Tyr-111 contacts substrate.

This sequence belongs to the tRNA pseudouridine synthase TruA family. Homodimer.

It catalyses the reaction uridine(38/39/40) in tRNA = pseudouridine(38/39/40) in tRNA. Its function is as follows. Formation of pseudouridine at positions 38, 39 and 40 in the anticodon stem and loop of transfer RNAs. In Jannaschia sp. (strain CCS1), this protein is tRNA pseudouridine synthase A.